Reading from the N-terminus, the 199-residue chain is FMN-dependent NADH:quinone oxidoreductase 2 (199 aa).

Residues serine 10, 16-18, and 96-99 contribute to the FMN site; these read SVS and MYNF.

It belongs to the azoreductase type 1 family. In terms of assembly, homodimer. It depends on FMN as a cofactor.

The enzyme catalyses 2 a quinone + NADH + H(+) = 2 a 1,4-benzosemiquinone + NAD(+). The catalysed reaction is N,N-dimethyl-1,4-phenylenediamine + anthranilate + 2 NAD(+) = 2-(4-dimethylaminophenyl)diazenylbenzoate + 2 NADH + 2 H(+). Its function is as follows. Quinone reductase that provides resistance to thiol-specific stress caused by electrophilic quinones. In terms of biological role, also exhibits azoreductase activity. Catalyzes the reductive cleavage of the azo bond in aromatic azo compounds to the corresponding amines. The sequence is that of FMN-dependent NADH:quinone oxidoreductase 2 from Pseudomonas fluorescens (strain ATCC BAA-477 / NRRL B-23932 / Pf-5).